The following is a 464-amino-acid chain: MAVGKVKQIVGPTLDIEFPPGQLPNILNAIKIIDPKDQRELIAEVAMHLGDNQVRCIALSSTDGLVREAQAVDTEAPISIPVGSPTLGRLLNVLGQPIDEMGAIENAEISPIHKASPTFEEQDTQGVIFETGIKVIDLLCPYTKGGKVGLFGGAGVGKSVIVMELIHNIATHHGGYSVFCGIGERTREGNDLWLEMKESGILSKTSLVFGQMNEPPGARMRVGLTGLTMAEHFRDQEHQNVLLFIDNIFRFVQAGSEVSALLGRMPSAVGYQPTLASEIGSLQERITSTKHGSITSVQAIYVPADDYTDPAPASIFPHLDAATTLSRQIAELGIYPAVDPLNSSSRILDPHVLGEEHYQVARQVQKVLQRYKDLQDIIAILGIDELSEEDQLTVSRARRIQKFLSQPFFVAETFTGKKGRFVKLPDTIKGFKMIVEGEMDNIPEQAFYMVGTIEEVFEKAEQMK.

Position 152-159 (152-159) interacts with ATP; it reads GGAGVGKS.

The protein belongs to the ATPase alpha/beta chains family. As to quaternary structure, F-type ATPases have 2 components, CF(1) - the catalytic core - and CF(0) - the membrane proton channel. CF(1) has five subunits: alpha(3), beta(3), gamma(1), delta(1), epsilon(1). CF(0) has three main subunits: a(1), b(2) and c(9-12). The alpha and beta chains form an alternating ring which encloses part of the gamma chain. CF(1) is attached to CF(0) by a central stalk formed by the gamma and epsilon chains, while a peripheral stalk is formed by the delta and b chains.

Its subcellular location is the cell membrane. It carries out the reaction ATP + H2O + 4 H(+)(in) = ADP + phosphate + 5 H(+)(out). In terms of biological role, produces ATP from ADP in the presence of a proton gradient across the membrane. The catalytic sites are hosted primarily by the beta subunits. In Protochlamydia amoebophila (strain UWE25), this protein is ATP synthase subunit beta.